Consider the following 1328-residue polypeptide: ABC transporter G family member 2 (1328 aa).

Positions 53–299 (VTARNLSMSI…FEGLGFKLPK (247 aa)) constitute an ABC transporter 1 domain. ATP is bound at residue 91–98 (GSPGCGKT). Residues 388–665 (ISSQVAVRMR…FGMYFFLKNV (278 aa)) form the ABC transmembrane type-2 1 domain. Helical transmembrane passes span 398-418 (IIKSIVMGLILGSLFYGLDLN), 428-448 (LIFFSLLFIVFSGMGAIAILF), 477-497 (IPIALLETVVFCVLVYWMCGL), 504-524 (FIYFLLMNFVGDLAFQSFFKM), 534-554 (LASVIAPAALAPFILFSGFMA), 559-579 (IGGWWIWIYWISPIKYAFEGL), and 642-662 (IDLLIVFAFGALFSFGMYFFL). The segment at 670 to 691 (RASDPKNDKRSKKASKRSKKIK) is disordered. Basic residues predominate over residues 678-689 (KRSKKASKRSKK). Residues 721-960 (VYEVDVKKDG…DLLGYFENHG (240 aa)) form the ABC transporter 2 domain. ATP is bound at residue 755-762 (GPSGAGKS). Positions 1049 to 1286 (VRRVQNIRTR…PICPITNGNQ (238 aa)) constitute an ABC transmembrane type-2 2 domain. 6 helical membrane passes run 1059–1076 (LMRSLFLGVVLGTLFVRM), 1087–1107 (VSILFFSLMFGGMSGMSSIPI), 1128–1148 (IYLFTFIVTDLPWVFLSAIIY), 1172–1192 (FISFTTYFNFSMLAMVFATVL), 1197–1217 (IAHALGGVALSISSLFAGFMI), and 1303–1323 (AVIFGYSVFFFICIFIALKFI).

The protein belongs to the ABC transporter superfamily. ABCG family. PDR (TC 3.A.1.205) subfamily.

The protein localises to the endosome membrane. In terms of biological role, required for endocytosis and endosomal pH regulation. This is ABC transporter G family member 2 (abcG2) from Dictyostelium discoideum (Social amoeba).